The sequence spans 380 residues: Methylthioribose-1-phosphate isomerase (380 aa).

The Proton donor role is filled by D257.

Belongs to the eIF-2B alpha/beta/delta subunits family. MtnA subfamily.

It is found in the cytoplasm. The protein resides in the nucleus. It carries out the reaction 5-(methylsulfanyl)-alpha-D-ribose 1-phosphate = 5-(methylsulfanyl)-D-ribulose 1-phosphate. The protein operates within amino-acid biosynthesis; L-methionine biosynthesis via salvage pathway; L-methionine from S-methyl-5-thio-alpha-D-ribose 1-phosphate: step 1/6. Functionally, catalyzes the interconversion of methylthioribose-1-phosphate (MTR-1-P) into methylthioribulose-1-phosphate (MTRu-1-P). This is Methylthioribose-1-phosphate isomerase from Naegleria gruberi (Amoeba).